Reading from the N-terminus, the 117-residue chain is Large ribosomal subunit protein bL20c (117 aa).

Belongs to the bacterial ribosomal protein bL20 family.

It localises to the plastid. Its subcellular location is the chloroplast. Its function is as follows. Binds directly to 23S ribosomal RNA and is necessary for the in vitro assembly process of the 50S ribosomal subunit. It is not involved in the protein synthesizing functions of that subunit. The chain is Large ribosomal subunit protein bL20c from Populus trichocarpa (Western balsam poplar).